The following is a 289-amino-acid chain: Glucosamine-6-phosphate deaminase 1 (289 aa).

The active-site Proton acceptor; for enolization step is D72. Catalysis depends on D141, which acts as the For ring-opening step. The active-site Proton acceptor; for ring-opening step is H143. The active-site For ring-opening step is E148. Residue T161 is modified to Phosphothreonine.

This sequence belongs to the glucosamine/galactosamine-6-phosphate isomerase family. As to quaternary structure, homohexamer. As to expression, widely expressed. Detected in brain, liver, kidney, muscle, ovary, testis, spermatids and spermatozoa. In spermatids, located close to the developing acrosome vesicle. In spermatozoa, found close to the acrosomal region.

The protein localises to the cytoplasm. It catalyses the reaction alpha-D-glucosamine 6-phosphate + H2O = beta-D-fructose 6-phosphate + NH4(+). Its pathway is nucleotide-sugar biosynthesis; UDP-N-acetyl-alpha-D-glucosamine biosynthesis; alpha-D-glucosamine 6-phosphate from D-fructose 6-phosphate: step 1/1. Its activity is regulated as follows. Allosterically activated by N-acetylglucosamine-6-phosphate (GlcNAc6P). Its function is as follows. Catalyzes the reversible conversion of alpha-D-glucosamine 6-phosphate (GlcN-6P) into beta-D-fructose 6-phosphate (Fru-6P) and ammonium ion, a regulatory reaction step in de novo uridine diphosphate-N-acetyl-alpha-D-glucosamine (UDP-GlcNAc) biosynthesis via hexosamine pathway. Deamination is coupled to aldo-keto isomerization mediating the metabolic flux from UDP-GlcNAc toward Fru-6P. At high ammonium level can drive amination and isomerization of Fru-6P toward hexosamines and UDP-GlcNAc synthesis. Has a role in fine tuning the metabolic fluctuations of cytosolic UDP-GlcNAc and their effects on hyaluronan synthesis that occur during tissue remodeling. Seems to trigger calcium oscillations in mammalian eggs. These oscillations serve as the essential trigger for egg activation and early development of the embryo. This is Glucosamine-6-phosphate deaminase 1 from Mus musculus (Mouse).